Reading from the N-terminus, the 68-residue chain is Large ribosomal subunit protein uL30 (68 aa).

Belongs to the universal ribosomal protein uL30 family. Part of the 50S ribosomal subunit.

The polypeptide is Large ribosomal subunit protein uL30 (Bartonella henselae (strain ATCC 49882 / DSM 28221 / CCUG 30454 / Houston 1) (Rochalimaea henselae)).